Consider the following 156-residue polypeptide: Hemerythrin-like protein (156 aa).

Fe cation is bound by residues His-54, His-84, Glu-88, His-109, His-113, His-142, and Asp-147.

The protein belongs to the hemerythrin family.

In terms of biological role, oxygen-binding protein. The oxygen-binding site contains two iron atoms. The chain is Hemerythrin-like protein from Nematostella vectensis (Starlet sea anemone).